A 255-amino-acid polypeptide reads, in one-letter code: Taurine import ATP-binding protein TauB (255 aa).

The ABC transporter domain maps to 2–229; it reads LQISHLYADY…RFVAGESSRS (228 aa). Position 34 to 41 (34 to 41) interacts with ATP; that stretch reads GPSGCGKT.

It belongs to the ABC transporter superfamily. Taurine importer (TC 3.A.1.17.1) family. In terms of assembly, the complex is composed of two ATP-binding proteins (TauB), two transmembrane proteins (TauC) and a solute-binding protein (TauA).

It is found in the cell inner membrane. The catalysed reaction is taurine(out) + ATP + H2O = taurine(in) + ADP + phosphate + H(+). Part of the ABC transporter complex TauABC involved in taurine import. Responsible for energy coupling to the transport system. This is Taurine import ATP-binding protein TauB from Shigella flexneri serotype 5b (strain 8401).